The chain runs to 479 residues: PTS system sucrose-specific EIIBC component (479 aa).

A PTS EIIB type-1 domain is found at 4–87 (PAVAKELLTL…AKLTGMSEMS (84 aa)). Catalysis depends on Cys26, which acts as the Phosphocysteine intermediate; for EIIB activity. Transmembrane regions (helical) follow at residues 112–132 (IFVP…IYNL), 158–178 (MINT…AFSA), 182–202 (FGGN…PDLL), 204–224 (GWGF…ILGF), 232–252 (QGSV…ELGL), 264–284 (LTPL…VGPF), 303–323 (AGFV…ITGM), 345–365 (FIFP…LAVG), 376–396 (IAIP…MFGV), 403–423 (PFIA…MFNV), and 448–468 (IAGM…LGIG). The region spanning 120 to 477 (IVAGGLLMGI…GDRAKVGKKA (358 aa)) is the PTS EIIC type-1 domain.

It localises to the cell inner membrane. It catalyses the reaction N(pros)-phospho-L-histidyl-[protein](out) + sucrose = sucrose 6(G)-phosphate(in) + L-histidyl-[protein]. Its function is as follows. The phosphoenolpyruvate-dependent sugar phosphotransferase system (sugar PTS), a major carbohydrate active transport system, catalyzes the phosphorylation of incoming sugar substrates concomitantly with their translocation across the cell membrane. This system is involved in sucrose transport. The chain is PTS system sucrose-specific EIIBC component from Vibrio alginolyticus.